The primary structure comprises 248 residues: Transmembrane protein 182 (248 aa).

The signal sequence occupies residues 1 to 26 (MKIHVAGFFAGLFGALATLFILLSFG). Topologically, residues 27 to 136 (TDYWLLASET…IIYRGFWSVS (110 aa)) are extracellular. 2 N-linked (GlcNAc...) asparagine glycosylation sites follow: Asn-66 and Asn-119. A helical transmembrane segment spans residues 137–157 (MLVGVAAVVAGGFIIICAAPF). At 158 to 167 (ASHRLYKAGG) the chain is on the cytoplasmic side. Residues 168–188 (GLYLISGFFVLVVTAMYVIWI) form a helical membrane-spanning segment. The Extracellular portion of the chain corresponds to 189-218 (DVLDVISLYTEYQKLNKCADFELNKTYGLS). Asn-212 carries an N-linked (GlcNAc...) asparagine glycan. Residues 219 to 239 (FMFAPVGVFFCFLSGLLFLVI) traverse the membrane as a helical segment. Residues 240–248 (GRTVHHQYN) lie on the Cytoplasmic side of the membrane.

It belongs to the TMEM182 family.

The protein resides in the cell membrane. In terms of biological role, may negatively regulate myogenesis and skeletal muscle regeneration. This Danio rerio (Zebrafish) protein is Transmembrane protein 182 (tmem182a).